The sequence spans 130 residues: Small ribosomal subunit protein uS9 (130 aa).

The protein belongs to the universal ribosomal protein uS9 family.

This is Small ribosomal subunit protein uS9 from Edwardsiella ictaluri (strain 93-146).